The chain runs to 149 residues: MSNESNDLEKNISHLDPTGVDNAYIPPEQPETKHSRFNIDRDTLRNHFIAAVGEFCGTFMFLWCAYVICNVANHDVALTTEPEGSHPGQLIMIALGFGFSVMFSIWCFWWGFEPSRFSLFVFGQSHLSSQMCSDVVSSDHCWDGCWWCR.

The segment at 1-35 (MSNESNDLEKNISHLDPTGVDNAYIPPEQPETKHS) is disordered. Topologically, residues 1–47 (MSNESNDLEKNISHLDPTGVDNAYIPPEQPETKHSRFNIDRDTLRNH) are cytoplasmic. A helical transmembrane segment spans residues 48–68 (FIAAVGEFCGTFMFLWCAYVI). Topologically, residues 69–89 (CNVANHDVALTTEPEGSHPGQ) are extracellular. Residues 90–110 (LIMIALGFGFSVMFSIWCFWW) traverse the membrane as a helical segment. At 111–149 (GFEPSRFSLFVFGQSHLSSQMCSDVVSSDHCWDGCWWCR) the chain is on the cytoplasmic side.

The protein belongs to the MIP/aquaporin (TC 1.A.8) family.

The protein resides in the endoplasmic reticulum membrane. Its subcellular location is the cell membrane. Its function is as follows. Water channel required to facilitate the transport of water across membranes. Involved in freeze tolerance, osmotolerance and cell flocculation in liquid cultures. Is non-functional in most laboratory strains. The polypeptide is Aquaporin-like protein 2 (AQY2-2) (Saccharomyces cerevisiae (strain RM11-1a) (Baker's yeast)).